Here is a 366-residue protein sequence, read N- to C-terminus: Acetylserotonin O-methyltransferase 3 (366 aa).

S-adenosyl-L-homocysteine is bound by residues G209, D232, D253, and K267. The active-site Proton acceptor is H271. Catalysis depends on residues E302 and E332.

It belongs to the class I-like SAM-binding methyltransferase superfamily. Cation-independent O-methyltransferase family. In terms of assembly, homodimer. Expressed at low levels in roots, shoots, leaves, stems and flowers.

It localises to the cytoplasm. It catalyses the reaction N-acetylserotonin + S-adenosyl-L-methionine = melatonin + S-adenosyl-L-homocysteine + H(+). It functions in the pathway aromatic compound metabolism; melatonin biosynthesis; melatonin from serotonin: step 1/2. Its function is as follows. Methyltransferase which catalyzes the transfer of a methyl group onto N-acetylserotonin, producing melatonin (N-acetyl-5-methoxytryptamine). The sequence is that of Acetylserotonin O-methyltransferase 3 from Oryza sativa subsp. japonica (Rice).